The primary structure comprises 376 residues: Succinyl-diaminopimelate desuccinylase (376 aa).

His-66 contacts Zn(2+). Residue Asp-68 is part of the active site. Residue Asp-99 participates in Zn(2+) binding. Residue Glu-133 is the Proton acceptor of the active site. Zn(2+) is bound by residues Glu-134, Glu-162, and His-348.

This sequence belongs to the peptidase M20A family. DapE subfamily. As to quaternary structure, homodimer. It depends on Zn(2+) as a cofactor. Requires Co(2+) as cofactor.

The catalysed reaction is N-succinyl-(2S,6S)-2,6-diaminopimelate + H2O = (2S,6S)-2,6-diaminopimelate + succinate. Its pathway is amino-acid biosynthesis; L-lysine biosynthesis via DAP pathway; LL-2,6-diaminopimelate from (S)-tetrahydrodipicolinate (succinylase route): step 3/3. In terms of biological role, catalyzes the hydrolysis of N-succinyl-L,L-diaminopimelic acid (SDAP), forming succinate and LL-2,6-diaminopimelate (DAP), an intermediate involved in the bacterial biosynthesis of lysine and meso-diaminopimelic acid, an essential component of bacterial cell walls. In Thioalkalivibrio sulfidiphilus (strain HL-EbGR7), this protein is Succinyl-diaminopimelate desuccinylase.